We begin with the raw amino-acid sequence, 127 residues long: Large ribosomal subunit protein bL12 (127 aa).

The interval 98 to 127 is disordered; the sequence is PKPIKEGAPKAEAESLKSKLEEAGAEVELK.

Belongs to the bacterial ribosomal protein bL12 family. Homodimer. Part of the ribosomal stalk of the 50S ribosomal subunit. Forms a multimeric L10(L12)X complex, where L10 forms an elongated spine to which 2 to 4 L12 dimers bind in a sequential fashion. Binds GTP-bound translation factors.

In terms of biological role, forms part of the ribosomal stalk which helps the ribosome interact with GTP-bound translation factors. Is thus essential for accurate translation. This is Large ribosomal subunit protein bL12 from Amoebophilus asiaticus (strain 5a2).